A 134-amino-acid chain; its full sequence is Profilin-3 (134 aa).

Cysteines 13 and 118 form a disulfide. Residues 84-100 (AVIRGKKGSGGITIKKT) carry the Involved in PIP2 interaction motif. Thr114 is subject to Phosphothreonine.

The protein belongs to the profilin family. Occurs in many kinds of cells as a complex with monomeric actin in a 1:1 ratio. Phosphorylated by MAP kinases.

The protein resides in the cytoplasm. The protein localises to the cytoskeleton. Its function is as follows. Binds to actin and affects the structure of the cytoskeleton. At high concentrations, profilin prevents the polymerization of actin, whereas it enhances it at low concentrations. This Olea europaea (Common olive) protein is Profilin-3.